We begin with the raw amino-acid sequence, 377 residues long: Acetylornithine aminotransferase (377 aa).

Pyridoxal 5'-phosphate contacts are provided by residues 94-95 (GT) and F121. Position 124 (R124) interacts with N(2)-acetyl-L-ornithine. Pyridoxal 5'-phosphate is bound at residue 206–209 (DEIQ). K235 is subject to N6-(pyridoxal phosphate)lysine. S263 provides a ligand contact to N(2)-acetyl-L-ornithine. Residue T264 coordinates pyridoxal 5'-phosphate.

This sequence belongs to the class-III pyridoxal-phosphate-dependent aminotransferase family. ArgD subfamily. As to quaternary structure, homodimer. Requires pyridoxal 5'-phosphate as cofactor.

The protein localises to the cytoplasm. It carries out the reaction N(2)-acetyl-L-ornithine + 2-oxoglutarate = N-acetyl-L-glutamate 5-semialdehyde + L-glutamate. The protein operates within amino-acid biosynthesis; L-arginine biosynthesis; N(2)-acetyl-L-ornithine from L-glutamate: step 4/4. The sequence is that of Acetylornithine aminotransferase from Lactococcus lactis subsp. lactis (strain IL1403) (Streptococcus lactis).